A 276-amino-acid chain; its full sequence is Merozoite surface protein 2 (276 aa).

Positions 1–20 (MKVIKTLSIINFFIFVTFNI) are cleaved as a signal peptide. N-linked (GlcNAc...) asparagine glycosylation is found at N22 and N36. Residues 44 to 202 (AESNPSTGAG…EQTESPELQS (159 aa)) form a polymorphic region region. Positions 44–242 (AESNPSTGAG…CTDGNKENCG (199 aa)) are disordered. Residues 51–90 (GAGGSGSAGGSGSAGGSGSAGGSGSAGGSGSAGSGDGNGA) are compositionally biased toward gly residues. Tandem repeats lie at residues 53 to 58 (GGSGSA), 59 to 64 (GGSGSA), 65 to 70 (GGSGSA), 71 to 76 (GGSGSA), and 77 to 82 (GGSGSA). The segment at 53–82 (GGSGSAGGSGSAGGSGSAGGSGSAGGSGSA) is 5 X 6 AA tandem repeats of G-G-S-G-S-A. Over residues 91-127 (NPGADAERSPSTPATTTTTTTTNDAEASTSTSSENPN) the composition is skewed to low complexity. Polar residues-rich tracts occupy residues 143–169 (KPNQ…NVPP), 176–187 (KSPTAQPEQAEN), and 194–204 (QTESPELQSAP). N-linked (GlcNAc...) asparagine glycosylation occurs at N153. Residue N225 is glycosylated (N-linked (GlcNAc...) asparagine). The segment covering 229 to 238 (SQKECTDGNK) has biased composition (basic and acidic residues). Residues C233 and C241 are joined by a disulfide bond. N-linked (GlcNAc...) asparagine glycosylation occurs at N250. N250 carries GPI-anchor amidated asparagine lipidation. Positions 251–276 (SSNIASINKFVVLISATLVLSFAIFI) are cleaved as a propeptide — removed in mature form.

The protein resides in the cell membrane. May play a role in the merozoite attachment to the erythrocyte. This chain is Merozoite surface protein 2, found in Plasmodium falciparum (isolate 7G8).